Here is a 234-residue protein sequence, read N- to C-terminus: Octanoyltransferase (234 aa).

Residues 42-226 (PDTPDEFWVV…ELASLIGYET (185 aa)) form the BPL/LPL catalytic domain. Residues 81–88 (RGGQVTYH), 157–159 (SLG), and 170–172 (GLA) contribute to the substrate site. The Acyl-thioester intermediate role is filled by C188.

The protein belongs to the LipB family.

It localises to the cytoplasm. The catalysed reaction is octanoyl-[ACP] + L-lysyl-[protein] = N(6)-octanoyl-L-lysyl-[protein] + holo-[ACP] + H(+). The protein operates within protein modification; protein lipoylation via endogenous pathway; protein N(6)-(lipoyl)lysine from octanoyl-[acyl-carrier-protein]: step 1/2. Functionally, catalyzes the transfer of endogenously produced octanoic acid from octanoyl-acyl-carrier-protein onto the lipoyl domains of lipoate-dependent enzymes. Lipoyl-ACP can also act as a substrate although octanoyl-ACP is likely to be the physiological substrate. This chain is Octanoyltransferase, found in Aeromonas hydrophila subsp. hydrophila (strain ATCC 7966 / DSM 30187 / BCRC 13018 / CCUG 14551 / JCM 1027 / KCTC 2358 / NCIMB 9240 / NCTC 8049).